The chain runs to 273 residues: MSTPRIAFIGAGNMAASLIGGLRAQGVPAAQIRASDPGAEQRAKIAGEFAIDVVESNAEAVADADVVVLSVKPQAMKAVCQALAPALKPEQLIVSIAAGIPCASLEAWLGQPRPVVRCMPNTPALLRQGASGLYANAQVSAAQCEQAGQLLSAVGIALWLDDEAQIDAVTAVSGSGPAYFFLLMQAMTDAGEKLGLSRETASRLTLQTALGAAQMALSSEVEPAELRRRVTSPNGTTEAAIKSFQANGFEALVEQALNAASQRSAELAEQLGQ.

This sequence belongs to the pyrroline-5-carboxylate reductase family.

The protein localises to the cytoplasm. The catalysed reaction is L-proline + NADP(+) = (S)-1-pyrroline-5-carboxylate + NADPH + 2 H(+). The enzyme catalyses L-proline + NAD(+) = (S)-1-pyrroline-5-carboxylate + NADH + 2 H(+). Its pathway is amino-acid biosynthesis; L-proline biosynthesis; L-proline from L-glutamate 5-semialdehyde: step 1/1. Its function is as follows. Catalyzes the reduction of 1-pyrroline-5-carboxylate (PCA) to L-proline. The protein is Pyrroline-5-carboxylate reductase of Pseudomonas aeruginosa (strain ATCC 15692 / DSM 22644 / CIP 104116 / JCM 14847 / LMG 12228 / 1C / PRS 101 / PAO1).